A 950-amino-acid polypeptide reads, in one-letter code: Valine--tRNA ligase, mitochondrial (950 aa).

A mitochondrion-targeting transit peptide spans 1–90 (MFHFQRSFSS…ITIQDALARF (90 aa)). Positions 67–77 (PNITGKLHIGH) match the 'HIGH' region motif. Positions 556 to 560 (KMSKS) match the 'KMSKS' region motif. Lysine 559 lines the ATP pocket.

It belongs to the class-I aminoacyl-tRNA synthetase family.

It localises to the mitochondrion. The catalysed reaction is tRNA(Val) + L-valine + ATP = L-valyl-tRNA(Val) + AMP + diphosphate. The chain is Valine--tRNA ligase, mitochondrial (vas1) from Schizosaccharomyces pombe (strain 972 / ATCC 24843) (Fission yeast).